Consider the following 427-residue polypeptide: Enolase (427 aa).

Residue Gln-163 coordinates (2R)-2-phosphoglycerate. Glu-205 serves as the catalytic Proton donor. Asp-242, Glu-285, and Asp-312 together coordinate Mg(2+). (2R)-2-phosphoglycerate is bound by residues Lys-337, Arg-366, Ser-367, and Lys-388. Lys-337 serves as the catalytic Proton acceptor.

Belongs to the enolase family. Mg(2+) serves as cofactor.

It is found in the cytoplasm. The protein localises to the secreted. It localises to the cell surface. The catalysed reaction is (2R)-2-phosphoglycerate = phosphoenolpyruvate + H2O. The protein operates within carbohydrate degradation; glycolysis; pyruvate from D-glyceraldehyde 3-phosphate: step 4/5. Functionally, catalyzes the reversible conversion of 2-phosphoglycerate (2-PG) into phosphoenolpyruvate (PEP). It is essential for the degradation of carbohydrates via glycolysis. The sequence is that of Enolase from Ralstonia pickettii (strain 12J).